The following is a 313-amino-acid chain: MEIILANPRGFCAGVDRAIEIVDRAIEVFGAPIYVRHEVVHNRYVVDGLRERGAVFVEELSEVPENSTVIFSAHGVSKQIQEEARERGLQVFDATCPLVTKVHIEVHQHASEGREIVFIGHAGHPEVEGTMGQYDNPAGGIYLVESPEDVEMLQVKNPDNLAYVTQTTLSIDDTGAVVEALKMRFPKILGPRKDDICYATQNRQDAVKKLAAQCDTILVVGSPNSSNSNRLREIADKLGRKAFLIDNAAQLTRDMVAGAQRIGVTAGASAPEILVQQVIAQLKEWGGRTATETQGIEEKVVFSLPKELRRLNA.

Position 12 (C12) interacts with [4Fe-4S] cluster. (2E)-4-hydroxy-3-methylbut-2-enyl diphosphate-binding residues include H41 and H74. Dimethylallyl diphosphate is bound by residues H41 and H74. Isopentenyl diphosphate is bound by residues H41 and H74. C96 provides a ligand contact to [4Fe-4S] cluster. H124 contributes to the (2E)-4-hydroxy-3-methylbut-2-enyl diphosphate binding site. Dimethylallyl diphosphate is bound at residue H124. H124 is a binding site for isopentenyl diphosphate. The Proton donor role is filled by E126. T167 contacts (2E)-4-hydroxy-3-methylbut-2-enyl diphosphate. [4Fe-4S] cluster is bound at residue C197. (2E)-4-hydroxy-3-methylbut-2-enyl diphosphate is bound by residues S225, S226, N227, and S269. Positions 225, 226, 227, and 269 each coordinate dimethylallyl diphosphate. 4 residues coordinate isopentenyl diphosphate: S225, S226, N227, and S269.

This sequence belongs to the IspH family. [4Fe-4S] cluster serves as cofactor.

The enzyme catalyses isopentenyl diphosphate + 2 oxidized [2Fe-2S]-[ferredoxin] + H2O = (2E)-4-hydroxy-3-methylbut-2-enyl diphosphate + 2 reduced [2Fe-2S]-[ferredoxin] + 2 H(+). The catalysed reaction is dimethylallyl diphosphate + 2 oxidized [2Fe-2S]-[ferredoxin] + H2O = (2E)-4-hydroxy-3-methylbut-2-enyl diphosphate + 2 reduced [2Fe-2S]-[ferredoxin] + 2 H(+). Its pathway is isoprenoid biosynthesis; dimethylallyl diphosphate biosynthesis; dimethylallyl diphosphate from (2E)-4-hydroxy-3-methylbutenyl diphosphate: step 1/1. The protein operates within isoprenoid biosynthesis; isopentenyl diphosphate biosynthesis via DXP pathway; isopentenyl diphosphate from 1-deoxy-D-xylulose 5-phosphate: step 6/6. Catalyzes the conversion of 1-hydroxy-2-methyl-2-(E)-butenyl 4-diphosphate (HMBPP) into a mixture of isopentenyl diphosphate (IPP) and dimethylallyl diphosphate (DMAPP). Acts in the terminal step of the DOXP/MEP pathway for isoprenoid precursor biosynthesis. The chain is 4-hydroxy-3-methylbut-2-enyl diphosphate reductase from Methylococcus capsulatus (strain ATCC 33009 / NCIMB 11132 / Bath).